We begin with the raw amino-acid sequence, 425 residues long: Enolase (425 aa).

Residue Gln163 coordinates (2R)-2-phosphoglycerate. The active-site Proton donor is Glu205. Mg(2+) is bound by residues Asp242, Glu285, and Asp312. (2R)-2-phosphoglycerate contacts are provided by Lys337, Arg366, Ser367, and Lys388. The Proton acceptor role is filled by Lys337.

It belongs to the enolase family. The cofactor is Mg(2+).

It is found in the cytoplasm. It localises to the secreted. Its subcellular location is the cell surface. The catalysed reaction is (2R)-2-phosphoglycerate = phosphoenolpyruvate + H2O. The protein operates within carbohydrate degradation; glycolysis; pyruvate from D-glyceraldehyde 3-phosphate: step 4/5. Catalyzes the reversible conversion of 2-phosphoglycerate (2-PG) into phosphoenolpyruvate (PEP). It is essential for the degradation of carbohydrates via glycolysis. This chain is Enolase, found in Syntrophomonas wolfei subsp. wolfei (strain DSM 2245B / Goettingen).